The primary structure comprises 350 residues: Vancomycin C-type resistance protein VanC2 (350 aa).

Active-site residues include Glu14 and Ser187. The 203-residue stretch at 141-343 (HQAAAAIGVQ…YQELLQKLLV (203 aa)) folds into the ATP-grasp domain. 171 to 226 (IQTHGFPVFFKPNEAGSSKGITKVTCVEEIASALKEAFTYCSAVLLQKNIAGVEIG) contributes to the ATP binding site. Residues Asp297, Glu310, and Asn312 each coordinate Mg(2+). Mn(2+) is bound by residues Asp297, Glu310, and Asn312. Ser321 is a catalytic residue.

It belongs to the D-alanine--D-alanine ligase family. In terms of assembly, homodimer. Mg(2+) serves as cofactor. It depends on Mn(2+) as a cofactor.

The protein localises to the cell membrane. The enzyme catalyses D-serine + D-alanine + ATP = D-alanyl-D-serine + ADP + phosphate + H(+). Its pathway is cell wall biogenesis; peptidoglycan biosynthesis. Its activity is regulated as follows. Inhibited by D-cycloserine. Its function is as follows. Required for low-level resistance to the glycopeptide antibiotic vancomycin. D-alanine--D-alanine ligase of altered specificity, which catalyzes synthesis of D-Ala-D-Ser; produces a peptidoglycan which does not terminate in D-alanine but in D-serine, thus probably reducing affinity for vancomycin. Only insignificant catalytic synthesis of D-Ala-D-Ala in vitro. The protein is Vancomycin C-type resistance protein VanC2 of Enterococcus casseliflavus (Enterococcus flavescens).